The chain runs to 268 residues: MTQVVILLAYQGTAYAGWQRQPNDLSIQEVIENSLAQVVGKRIPVTSSGRTDAEVHAFGQVAHFSQPDHPQFSQASSIKKMLNALLPKDIVIRDVVLGDDKFHSRFSAIAKEYRYVLTRSPKPLPWERYFAYYPRHHLKTDLMQEGAQYLLGTHDFASFANHGRDYTSTIRTLFNLDIVDHGETVTIICRGNGFLYKMVRNIVGSLLDISRGKYPPEYIQEILMQKNRRQGPPAAPSHALSLYHVCYPKPYHWFCTPECNINSLKEEK.

The active-site Nucleophile is the Asp52. Tyr113 provides a ligand contact to substrate.

Belongs to the tRNA pseudouridine synthase TruA family. As to quaternary structure, homodimer.

It catalyses the reaction uridine(38/39/40) in tRNA = pseudouridine(38/39/40) in tRNA. Functionally, formation of pseudouridine at positions 38, 39 and 40 in the anticodon stem and loop of transfer RNAs. This is tRNA pseudouridine synthase A from Chlamydia abortus (strain DSM 27085 / S26/3) (Chlamydophila abortus).